The sequence spans 341 residues: 4-hydroxy-2-oxovalerate aldolase 2 (341 aa).

In terms of domain architecture, Pyruvate carboxyltransferase spans 8–260; it reads VTVHDMTLRD…ETGVDVAKIT (253 aa). Position 16-17 (16-17) interacts with substrate; sequence RD. Residue D17 coordinates Mn(2+). H20 serves as the catalytic Proton acceptor. Residues S170 and H199 each contribute to the substrate site. Mn(2+)-binding residues include H199 and H201. Position 290 (Y290) interacts with substrate.

Belongs to the 4-hydroxy-2-oxovalerate aldolase family.

The enzyme catalyses (S)-4-hydroxy-2-oxopentanoate = acetaldehyde + pyruvate. In Dechloromonas aromatica (strain RCB), this protein is 4-hydroxy-2-oxovalerate aldolase 2.